Consider the following 921-residue polypeptide: Alanine--tRNA ligase (921 aa).

Zn(2+) is bound by residues H602, H606, C706, and H710.

It belongs to the class-II aminoacyl-tRNA synthetase family. The cofactor is Zn(2+).

Its subcellular location is the cytoplasm. It catalyses the reaction tRNA(Ala) + L-alanine + ATP = L-alanyl-tRNA(Ala) + AMP + diphosphate. Catalyzes the attachment of alanine to tRNA(Ala) in a two-step reaction: alanine is first activated by ATP to form Ala-AMP and then transferred to the acceptor end of tRNA(Ala). Also edits incorrectly charged Ser-tRNA(Ala) and Gly-tRNA(Ala) via its editing domain. The sequence is that of Alanine--tRNA ligase from Hyperthermus butylicus (strain DSM 5456 / JCM 9403 / PLM1-5).